We begin with the raw amino-acid sequence, 393 residues long: 8-amino-7-oxononanoate synthase (393 aa).

A substrate-binding site is contributed by Arg18. Position 105–106 (105–106) interacts with pyridoxal 5'-phosphate; the sequence is GY. His130 is a substrate binding site. 3 residues coordinate pyridoxal 5'-phosphate: Ser178, His206, and Thr234. The residue at position 237 (Lys237) is an N6-(pyridoxal phosphate)lysine. Thr353 provides a ligand contact to substrate.

This sequence belongs to the class-II pyridoxal-phosphate-dependent aminotransferase family. BioF subfamily. Homodimer. Requires pyridoxal 5'-phosphate as cofactor.

It carries out the reaction 6-carboxyhexanoyl-[ACP] + L-alanine + H(+) = (8S)-8-amino-7-oxononanoate + holo-[ACP] + CO2. Its pathway is cofactor biosynthesis; biotin biosynthesis. Its function is as follows. Catalyzes the decarboxylative condensation of pimeloyl-[acyl-carrier protein] and L-alanine to produce 8-amino-7-oxononanoate (AON), [acyl-carrier protein], and carbon dioxide. The protein is 8-amino-7-oxononanoate synthase of Geotalea daltonii (strain DSM 22248 / JCM 15807 / FRC-32) (Geobacter daltonii).